We begin with the raw amino-acid sequence, 418 residues long: Bile acid-CoA:amino acid N-acyltransferase (418 aa).

Residue Ser125 is modified to Phosphoserine. Catalysis depends on charge relay system residues Cys235, Asp328, and His362. At Ser416 the chain carries Phosphoserine.

Belongs to the C/M/P thioester hydrolase family. In terms of assembly, monomer. Expressed in the gallbladder mucosa and pancreas. Expressed in hepatocytes (at protein level).

The protein resides in the cytoplasm. The protein localises to the cytosol. Its subcellular location is the peroxisome. It catalyses the reaction choloyl-CoA + glycine = glycocholate + CoA + H(+). The enzyme catalyses hexadecanoyl-CoA + H2O = hexadecanoate + CoA + H(+). The catalysed reaction is choloyl-CoA + H2O = cholate + CoA + H(+). It carries out the reaction chenodeoxycholoyl-CoA + H2O = chenodeoxycholate + CoA + H(+). It catalyses the reaction eicosanoyl-CoA + H2O = eicosanoate + CoA + H(+). The enzyme catalyses octadecanoyl-CoA + H2O = octadecanoate + CoA + H(+). The catalysed reaction is docosanoyl-CoA + H2O = docosanoate + CoA + H(+). It carries out the reaction tetracosanoyl-CoA + H2O = tetracosanoate + CoA + H(+). It catalyses the reaction hexacosanoyl-CoA + H2O = hexacosanoate + CoA + H(+). The enzyme catalyses dodecanoyl-CoA + H2O = dodecanoate + CoA + H(+). The catalysed reaction is tetradecanoyl-CoA + H2O = tetradecanoate + CoA + H(+). It carries out the reaction choloyl-CoA + taurine = taurocholate + CoA + H(+). It catalyses the reaction chenodeoxycholoyl-CoA + glycine = glycochenodeoxycholate + CoA + H(+). The enzyme catalyses chenodeoxycholoyl-CoA + taurine = taurochenodeoxycholate + CoA + H(+). The catalysed reaction is eicosanoyl-CoA + glycine = N-eicosanoylglycinate + CoA + H(+). It carries out the reaction hexacosanoyl-CoA + glycine = N-hexacosanoylglycine + CoA + H(+). It catalyses the reaction docosanoyl-CoA + glycine = N-docosanoylglycine + CoA + H(+). Its function is as follows. Catalyzes the amidation of bile acids (BAs) with the amino acids taurine and glycine. More than 95% of the BAs are N-acyl amidates with glycine and taurine. Amidation of BAs in the liver with glycine or taurine prior to their excretion into bile is an important biochemical event in bile acid metabolism. This conjugation (or amidation) plays several important biological roles in that it promotes the secretion of BAs and cholesterol into bile and increases the detergent properties of BAs in the intestine, which facilitates lipid and vitamin absorption. May also act as an acyl-CoA thioesterase that regulates intracellular levels of free fatty acids. In vitro, catalyzes the hydrolysis of long- and very long-chain saturated acyl-CoAs to the free fatty acid and coenzyme A (CoASH), and conjugates glycine to these acyl-CoAs. In Homo sapiens (Human), this protein is Bile acid-CoA:amino acid N-acyltransferase (BAAT).